Consider the following 345-residue polypeptide: Neuropeptide receptor 15 (345 aa).

Residues 1–11 (MSVAVGIPYVC) lie on the Extracellular side of the membrane. The helical transmembrane segment at 12 to 32 (FFIILSVVGIIGNVIVIYAIA) threads the bilayer. The Cytoplasmic segment spans residues 33–40 (GDRNMRKS). A helical transmembrane segment spans residues 41–61 (VMNILLLNLAVADLANLIFTI). The Extracellular segment spans residues 62–90 (PEWIPPVFFGSTDWLFPSFLCPVCRYLEC). Cysteines 82 and 171 form a disulfide. The helical transmembrane segment at 91–111 (VFLFASISTQMIVCIERYIAI) threads the bilayer. Over 112–125 (VLPMQARQLCSRRN) the chain is Cytoplasmic. Residues 126-146 (VLITVLVDWIFVACFASPYAV) form a helical membrane-spanning segment. Topologically, residues 147–187 (WHSVKTKDRNTNSLRFKLFQLSATCSNTVGKSTWWQGYKLT) are extracellular. The chain crosses the membrane as a helical span at residues 188–208 (EFLAFYFVPCFIITVVYTKVA). At 209–246 (KCLWCKDPTLQCETRSCLDNKSSSRSSDALRTRRNVVK) the chain is on the cytoplasmic side. A helical membrane pass occupies residues 247–267 (MLIACVAVYFVCYSPIQVIFL). Residues 268-281 (SKAVLNVTIHPPYD) are Extracellular-facing. The chain crosses the membrane as a helical span at residues 282 to 304 (FILLMNALAMTCSASNPLLYTLF). Residues 305-345 (SQKFRRRLRDVLYCPSDVENETKTYYSINNTSIVGPRASFN) are Cytoplasmic-facing.

Belongs to the G-protein coupled receptor 1 family. As to expression, expressed in pharyngeal muscle and AWC, ASG, ASE, ASI, and ASJ sensory neurons. Expressed in ASI neuron. Expressed in AFD neurons and in AVK interneuron.

Its subcellular location is the cell membrane. In terms of biological role, probable receptor for neuropeptide ligand nlp-8 that plays a role in octopamine signaling and specifically, the octopamine inhibition of aversion responses in olfactory sensory neurons. Plays a crucial role in daf-7 expression. Acts in concert with gpa-4 to activate TGF-beta-like daf-7 secretion in the ASI neuron, thereby promoting larval development and inhibition of dauer diapause. Suppresses immune response against pathogenic infection by inhibiting transcription regulators elt-2 and hlh-30 in ASJ neuron. Promotes pathogen avoidance behavior via intestinal gon-2, independent of aerotaxis. This chain is Neuropeptide receptor 15 (npr-15), found in Caenorhabditis elegans.